Here is an 825-residue protein sequence, read N- to C-terminus: NT-3 growth factor receptor (825 aa).

Positions 1–31 (MDVSLCPAKCSFWRIFLLGSVWLDYVGSVLA) are cleaved as a signal peptide. 2 disulfides stabilise this stretch: Cys-32–Cys-38 and Cys-36–Cys-45. The Extracellular portion of the chain corresponds to 32-429 (CPANCVCSKT…TVTHKPEEDT (398 aa)). Residues Asn-68, Asn-72, and Asn-79 are each glycosylated (N-linked (GlcNAc...) asparagine). 2 LRR repeats span residues 104-125 (GLQKLTIRNSGLRSIQPRAFAK) and 128-149 (HLRYINLSSNRLTTLSWQLFQT). Residues Asn-133 and Asn-163 are each glycosylated (N-linked (GlcNAc...) asparagine). One can recognise an LRRCT domain in the interval 160–209 (NFFNCSCDIRWMQLWQEQGEAKLNNQNLYCINADGSQLPLFRMNISQCDL). 2 disulfide bridges follow: Cys-164–Cys-189 and Cys-166–Cys-207. Asn-203, Asn-218, Asn-232, Asn-259, Asn-267, Asn-272, and Asn-294 each carry an N-linked (GlcNAc...) asparagine glycan. Ig-like C2-type domains follow at residues 210 to 300 (PEIS…VALT) and 309 to 382 (SLEE…IAKN). Cys-231 and Cys-284 are joined by a disulfide. Cys-320 and Cys-362 are joined by a disulfide. N-linked (GlcNAc...) asparagine glycosylation is found at Asn-375 and Asn-388. The chain crosses the membrane as a helical span at residues 430 to 453 (FGVSIAVGLAAFACVLLVVLFIMI). Residues 454-825 (NKYGRRSKFG…ATPIYLDILG (372 aa)) are Cytoplasmic-facing. Ser-493 is modified (phosphoserine). A Phosphotyrosine; by autocatalysis modification is found at Tyr-516. The Protein kinase domain occupies 538–825 (IVLKRELGEG…ATPIYLDILG (288 aa)). ATP is bound by residues 544-552 (LGEGAFGKV) and Lys-572. Residue Asp-679 is the Proton acceptor of the active site. Tyr-705, Tyr-709, and Tyr-710 each carry phosphotyrosine; by autocatalysis.

The protein belongs to the protein kinase superfamily. Tyr protein kinase family. Insulin receptor subfamily. In terms of assembly, exists in a dynamic equilibrium between monomeric (low affinity) and dimeric (high affinity) structures. Binds SH2B2. Interacts with SQSTM1 and KIDINS220. Interacts with PTPRS. Interacts with MAPK8IP3/JIP3. Post-translationally, ligand-mediated auto-phosphorylation.

The protein resides in the membrane. The enzyme catalyses L-tyrosyl-[protein] + ATP = O-phospho-L-tyrosyl-[protein] + ADP + H(+). Its function is as follows. Receptor tyrosine kinase involved in nervous system and probably heart development. Upon binding of its ligand NTF3/neurotrophin-3, NTRK3 autophosphorylates and activates different signaling pathways, including the phosphatidylinositol 3-kinase/AKT and the MAPK pathways, that control cell survival and differentiation. The protein is NT-3 growth factor receptor (NTRK3) of Macaca fascicularis (Crab-eating macaque).